The primary structure comprises 480 residues: Glycerol 3-phosphate dehydrogenase (480 aa).

Residues Ile12, Glu31, 40-41 (TT), and 45-47 (SAI) each bind FAD. Sn-glycerol 3-phosphate is bound by residues Ser45 and His49. His49 functions as the Proton acceptor in the catalytic mechanism. Val172 serves as a coordination point for FAD. Lys249 and Arg310 together coordinate sn-glycerol 3-phosphate. An FAD-binding site is contributed by 335-336 (IE). Ser337 serves as a coordination point for sn-glycerol 3-phosphate. Ser341 is a binding site for FAD. Positions 400, 402, 437, and 442 each coordinate [2Fe-2S] cluster.

The cofactor is [2Fe-2S] cluster.

The catalysed reaction is sn-glycerol 3-phosphate + A = dihydroxyacetone phosphate + AH2. It functions in the pathway polyol metabolism; glycerol degradation via glycerol kinase pathway; glycerone phosphate from sn-glycerol 3-phosphate (aerobic route): step 1/1. Catalyzes the dehydrogenation of glycerol 3-phosphate to dihydroxyacetone phosphate. Is probably involved in anaerobic glycerol metabolism. Active in vitro with the artificial electron acceptor 2,6-dichlorophenolindophenol (DCPIP), but not with NAD or NADP. Also displays a very low oxidase activity in vitro on glycerol 3-phosphate with O2 as the electron acceptor, but this activity is most likely not physiological. The protein is Glycerol 3-phosphate dehydrogenase of Caloramator mitchellensis.